We begin with the raw amino-acid sequence, 262 residues long: Acyl-[acyl-carrier-protein]--UDP-N-acetylglucosamine O-acyltransferase (262 aa).

This sequence belongs to the transferase hexapeptide repeat family. LpxA subfamily. In terms of assembly, homotrimer.

Its subcellular location is the cytoplasm. The enzyme catalyses a (3R)-hydroxyacyl-[ACP] + UDP-N-acetyl-alpha-D-glucosamine = a UDP-3-O-[(3R)-3-hydroxyacyl]-N-acetyl-alpha-D-glucosamine + holo-[ACP]. It functions in the pathway glycolipid biosynthesis; lipid IV(A) biosynthesis; lipid IV(A) from (3R)-3-hydroxytetradecanoyl-[acyl-carrier-protein] and UDP-N-acetyl-alpha-D-glucosamine: step 1/6. Involved in the biosynthesis of lipid A, a phosphorylated glycolipid that anchors the lipopolysaccharide to the outer membrane of the cell. This chain is Acyl-[acyl-carrier-protein]--UDP-N-acetylglucosamine O-acyltransferase, found in Photorhabdus laumondii subsp. laumondii (strain DSM 15139 / CIP 105565 / TT01) (Photorhabdus luminescens subsp. laumondii).